Reading from the N-terminus, the 436-residue chain is Envelope glycoprotein (436 aa).

M1 is a signal peptide. Residues 2-436 (ANPSPHQIYN…GGLTVGGIAA (435 aa)) lie on the Extracellular side of the membrane. Residues N11 and N26 are each glycosylated (N-linked (GlcNAc...) asparagine; by host). Intrachain disulfides connect C95–C117 and C109–C122. The segment at 203–255 (PPQAMGPNLVLPDQKPPSRQSQTGSKVATQRPQTNESAPRSVGPTTMGPKRIG) is disordered. Residues 219–240 (PSRQSQTGSKVATQRPQTNESA) are compositionally biased toward polar residues. Residues N237, N272, and N277 are each glycosylated (N-linked (GlcNAc...) asparagine; by host). The CXXC signature appears at 282–285 (CWLC). Residues N304, N344, N360, and N380 are each glycosylated (N-linked (GlcNAc...) asparagine; by host).

The mature envelope protein (Env) consists of a trimer of SU-TM heterodimers attached by a labile interchain disulfide bond. In terms of processing, specific enzymatic cleavages in vivo yield mature proteins. Envelope glycoproteins are synthesized as an inactive precursor that is N-glycosylated and processed likely by host cell furin or by a furin-like protease in the Golgi to yield the mature SU and TM proteins. The cleavage site between SU and TM requires the minimal sequence [KR]-X-[KR]-R.

Its subcellular location is the virion membrane. The protein localises to the host cell membrane. Functionally, the surface protein (SU) attaches the virus to the host cell by binding to its receptor. This interaction triggers the refolding of the transmembrane protein (TM) and is thought to activate its fusogenic potential by unmasking its fusion peptide. Fusion occurs at the host cell plasma membrane. Its function is as follows. The transmembrane protein (TM) acts as a class I viral fusion protein. Under the current model, the protein has at least 3 conformational states: pre-fusion native state, pre-hairpin intermediate state, and post-fusion hairpin state. During viral and target cell membrane fusion, the coiled coil regions (heptad repeats) assume a trimer-of-hairpins structure, positioning the fusion peptide in close proximity to the C-terminal region of the ectodomain. The formation of this structure appears to drive apposition and subsequent fusion of viral and target cell membranes. Membranes fusion leads to delivery of the nucleocapsid into the cytoplasm. This is Envelope glycoprotein from Feline leukemia virus (strain C/FS246).